Here is a 445-residue protein sequence, read N- to C-terminus: Tubulin beta chain (445 aa).

Residues 1 to 4 (MREI) carry the MREI motif motif. Residues Gln11, Glu69, Ser138, Gly142, Thr143, Gly144, Asn204, and Asn226 each coordinate GTP. A Mg(2+)-binding site is contributed by Glu69. The disordered stretch occupies residues 421–445 (EYQQYQDATAEEEGEGEEEGDEEVA). A compositionally biased stretch (acidic residues) spans 429–445 (TAEEEGEGEEEGDEEVA). Position 438 is a 5-glutamyl polyglutamate (Glu438).

This sequence belongs to the tubulin family. Dimer of alpha and beta chains. A typical microtubule is a hollow water-filled tube with an outer diameter of 25 nm and an inner diameter of 15 nM. Alpha-beta heterodimers associate head-to-tail to form protofilaments running lengthwise along the microtubule wall with the beta-tubulin subunit facing the microtubule plus end conferring a structural polarity. Microtubules usually have 13 protofilaments but different protofilament numbers can be found in some organisms and specialized cells. Requires Mg(2+) as cofactor. Some glutamate residues at the C-terminus are polyglycylated, resulting in polyglycine chains on the gamma-carboxyl group. Glycylation is mainly limited to tubulin incorporated into axonemes (cilia and flagella) whereas glutamylation is prevalent in neuronal cells, centrioles, axonemes, and the mitotic spindle. Both modifications can coexist on the same protein on adjacent residues, and lowering polyglycylation levels increases polyglutamylation, and reciprocally. The precise function of polyglycylation is still unclear. In terms of processing, some glutamate residues at the C-terminus are polyglutamylated, resulting in polyglutamate chains on the gamma-carboxyl group. Polyglutamylation plays a key role in microtubule severing by spastin (SPAST). SPAST preferentially recognizes and acts on microtubules decorated with short polyglutamate tails: severing activity by SPAST increases as the number of glutamates per tubulin rises from one to eight, but decreases beyond this glutamylation threshold. In terms of tissue distribution, brain.

It localises to the cytoplasm. The protein localises to the cytoskeleton. In terms of biological role, tubulin is the major constituent of microtubules, a cylinder consisting of laterally associated linear protofilaments composed of alpha- and beta-tubulin heterodimers. Microtubules grow by the addition of GTP-tubulin dimers to the microtubule end, where a stabilizing cap forms. Below the cap, tubulin dimers are in GDP-bound state, owing to GTPase activity of alpha-tubulin. This Pseudopleuronectes americanus (Winter flounder) protein is Tubulin beta chain.